The sequence spans 392 residues: uncharacterized protein (392 aa).

The J domain maps to 7-76 (TEYYDLLGIS…RSQYDQFGKE (70 aa)). The residue at position 108 (Ser108) is a Phosphoserine.

This is an uncharacterized protein from Schizosaccharomyces pombe (strain 972 / ATCC 24843) (Fission yeast).